The following is a 100-amino-acid chain: UPF0045 protein MJ1052 (100 aa).

This sequence belongs to the UPF0045 family.

The protein is UPF0045 protein MJ1052 of Methanocaldococcus jannaschii (strain ATCC 43067 / DSM 2661 / JAL-1 / JCM 10045 / NBRC 100440) (Methanococcus jannaschii).